The chain runs to 380 residues: Transporter PPE51 (380 aa).

Met1 carries the N-acetylmethionine modification.

The protein belongs to the mycobacterial PPE family. As to quaternary structure, interacts with PE19 and PE25.

Its subcellular location is the cell outer membrane. Its function is as follows. Small molecule-selective channel required for the uptake of nutrients across the outer mycomembrane. Transports glycerol and glucose. Involved in sensitivity to M.tuberculosis growth inhibitory agrichemical 3,3-bis-di(methylsulfonyl)propionamide (3bMP1). Transports maltose and lactose disaccharides. Involved in sensitivity to bactericidal thio-disaccharide T-6 compound (1,6-anhydro-3-deoxy-4-S-(2,3,4,6-tetra-O-acetyl-beta-D-glucopyranosyl)-D-glycero-hexopyranos-2-ulose). Transports extracellular trehalose, a component of the cell envelope, and trehalose analog, 6-azido trehalose (6-TreAz), which has antimycobacterial activity. Functionally, plays a role in response to starvation and stress, likely environment within the host. Inhibits canonical autophagy in infected mouse RAW264.7 macrophages. Inhibits autophagy and enhances intracellular bacterial survival when expressed in human macrophage-like THP-1 cells. Inhibits Toll-like receptor 2 (TLR2)-dependent signaling leading to autophagy inhibition, increased intracellular bacterial survival, reduced phagocytosis and reduced secretion of interleukin 6 (IL-6) and IL-1 in infected mouse primary bone marrow-derived macrophage (BMDM) cells. Required for virulence and persistence in the lungs and spleens of intranasally infected C57BL/6J mice. Blocks the antibacterial effects of TLR2 activation, suppresses MHC class II-dependent antigen presentation, and reduces IFN-gamma and TNF-alpha-producing CD4(+) T cells during infection in C57BL/6J mice. The polypeptide is Transporter PPE51 (PPE51) (Mycobacterium tuberculosis (strain CDC 1551 / Oshkosh)).